Reading from the N-terminus, the 778-residue chain is General transcription and DNA repair factor IIH helicase subunit XPD/RAD3 (778 aa).

Residues 7–285 (DLPVLFPYPK…KVDSQKLQDE (279 aa)) enclose the Helicase ATP-binding domain. 42–49 (MPSGTGKT) provides a ligand contact to ATP. Residues cysteine 115, cysteine 133, cysteine 156, and cysteine 191 each coordinate [4Fe-4S] cluster. A DEAH box motif is present at residues 235–238 (DEAH). Residues 750 to 765 (SRKDQGGFIENENKEG) are compositionally biased toward basic and acidic residues. The tract at residues 750-778 (SRKDQGGFIENENKEGEQDEDEDEDIEMQ) is disordered. Over residues 766–778 (EQDEDEDEDIEMQ) the composition is skewed to acidic residues.

The protein belongs to the helicase family. RAD3/XPD subfamily. In terms of assembly, component of the 7-subunit TFIIH core complex composed of XPB/SSL2, XPD/RAD3, SSL1, TFB1, TFB2, TFB4 and TFB5, which is active in NER. The core complex associates with the 3-subunit CTD-kinase module TFIIK composed of CCL1, KIN28 and TFB3 to form the 10-subunit holoenzyme (holo-TFIIH) active in transcription. An additionnal subunit, TFB6, plays a role in the dissociation of the SSL2 helicase from TFIIH after transcription initiation. [4Fe-4S] cluster is required as a cofactor. Requires Mg(2+) as cofactor.

It is found in the nucleus. It carries out the reaction Couples ATP hydrolysis with the unwinding of duplex DNA at the replication fork by translocating in the 5'-3' direction. This creates two antiparallel DNA single strands (ssDNA). The leading ssDNA polymer is the template for DNA polymerase III holoenzyme which synthesizes a continuous strand.. It catalyses the reaction ATP + H2O = ADP + phosphate + H(+). ATP-dependent 5'-3' DNA helicase. Component of the general transcription and DNA repair factor IIH (TFIIH) core complex, which is involved in general and transcription-coupled nucleotide excision repair (NER) of damaged DNA and, when complexed to TFIIK, in RNA transcription by RNA polymerase II. In NER, TFIIH acts by opening DNA around the lesion to allow the excision of the damaged oligonucleotide and its replacement by a new DNA fragment. The ATP-dependent helicase activity of XPD/RAD3 is required for DNA opening. In transcription, TFIIH has an essential role in transcription initiation. When the pre-initiation complex (PIC) has been established, TFIIH is required for promoter opening and promoter escape. Phosphorylation of the C-terminal tail (CTD) of the largest subunit of RNA polymerase II by the kinase module TFIIK controls the initiation of transcription. XPD/RAD3 acts by forming a bridge between TFIIK and the core-TFIIH complex. Involved in the maintenance of the fidelity of DNA replication. Has single-stranded DNA-dependent ATPase activity. 5'-3' DNA helicase activity requires ATP (dATP partially substitutes), will unwind over 800 bp dsDNA. Able to unwind an RNA:DNA hybrid. This is General transcription and DNA repair factor IIH helicase subunit XPD/RAD3 from Saccharomyces cerevisiae (strain ATCC 204508 / S288c) (Baker's yeast).